Reading from the N-terminus, the 275-residue chain is Exosome complex component RRP40 (275 aa).

Position 2 is an N-acetylalanine (Ala2). Lys151 is covalently cross-linked (Glycyl lysine isopeptide (Lys-Gly) (interchain with G-Cter in SUMO2)).

The protein belongs to the RRP40 family. Component of the RNA exosome core complex (Exo-9), composed of EXOSC1, EXOSC2, EXOSC3, EXOSC4, EXOSC5, EXOSC6, EXOSC7, EXOSC8 and EXOSC9; within the complex interacts with EXOSC5 and EXOSC9. The catalytically inactive RNA exosome core complex (Exo-9) associates with the catalytic subunit EXOSC10/RRP6. Exo-9 may associate with DIS3 to form the nucleolar exosome complex, or DIS3L to form the cytoplasmic exosome complex. Exo-9 is formed by a hexameric base ring consisting of the heterodimers EXOSC4-EXOSC9, EXOSC5-EXOSC8 and EXOSC6-EXOSC7, and a cap ring consisting of EXOSC1, EXOSC2 and EXOSC3. The RNA exosome complex associates with cofactors C1D/RRP47, MPHOSPH6/MPP6 and MTREX/MTR4. Interacts with MPHOSPH6/MPP6; the interaction is direct. Interacts with GTPBP1. Interacts with ZC3HAV1. Interacts with DDX17 only in the presence of ZC3HAV1 in an RNA-independent manner. Interacts with DHX36; this interaction occurs in a RNase-insensitive manner. Interacts with HBS1L isoform 2.

It localises to the cytoplasm. It is found in the nucleus. Its subcellular location is the nucleolus. In terms of biological role, non-catalytic component of the RNA exosome complex which has 3'-&gt;5' exoribonuclease activity and participates in a multitude of cellular RNA processing and degradation events. In the nucleus, the RNA exosome complex is involved in proper maturation of stable RNA species such as rRNA, snRNA and snoRNA, in the elimination of RNA processing by-products and non-coding 'pervasive' transcripts, such as antisense RNA species and promoter-upstream transcripts (PROMPTs), and of mRNAs with processing defects, thereby limiting or excluding their export to the cytoplasm. The RNA exosome may be involved in Ig class switch recombination (CSR) and/or Ig variable region somatic hypermutation (SHM) by targeting AICDA deamination activity to transcribed dsDNA substrates. In the cytoplasm, the RNA exosome complex is involved in general mRNA turnover and specifically degrades inherently unstable mRNAs containing AU-rich elements (AREs) within their 3' untranslated regions, and in RNA surveillance pathways, preventing translation of aberrant mRNAs. It seems to be involved in degradation of histone mRNA. The catalytic inactive RNA exosome core complex of 9 subunits (Exo-9) is proposed to play a pivotal role in the binding and presentation of RNA for ribonucleolysis, and to serve as a scaffold for the association with catalytic subunits and accessory proteins or complexes. EXOSC3 as peripheral part of the Exo-9 complex stabilizes the hexameric ring of RNase PH-domain subunits through contacts with EXOSC9 and EXOSC5. The polypeptide is Exosome complex component RRP40 (EXOSC3) (Homo sapiens (Human)).